A 262-amino-acid chain; its full sequence is Ornithine carbamoyltransferase (262 aa).

Residues 3 to 7, Q30, R54, and 81 to 84 each bind carbamoyl phosphate; these read STRTR and HPTQ. Residues N114, D178, and 182-183 contribute to the L-ornithine site; that span reads SM. Carbamoyl phosphate contacts are provided by residues 219–222 and T247; that span reads HCLP.

The protein belongs to the aspartate/ornithine carbamoyltransferase superfamily. OTCase family.

The protein localises to the cytoplasm. It carries out the reaction carbamoyl phosphate + L-ornithine = L-citrulline + phosphate + H(+). It participates in amino-acid biosynthesis; L-arginine biosynthesis; L-arginine from L-ornithine and carbamoyl phosphate: step 1/3. Its function is as follows. Reversibly catalyzes the transfer of the carbamoyl group from carbamoyl phosphate (CP) to the N(epsilon) atom of ornithine (ORN) to produce L-citrulline. This is Ornithine carbamoyltransferase (argF) from Neisseria lactamica.